We begin with the raw amino-acid sequence, 86 residues long: Sodium channel neurotoxin MeuNaTxalpha-5 (86 aa).

A signal peptide spans 1-19 (MNYLILISFALLVITGVES). Residues 21–85 (RDAYIAKPHN…VPIRIPGKCH (65 aa)) enclose the LCN-type CS-alpha/beta domain. 4 cysteine pairs are disulfide-bonded: cysteine 31–cysteine 84, cysteine 35–cysteine 57, cysteine 43–cysteine 67, and cysteine 47–cysteine 69. A propeptide (removed by a carboxypeptidase) is located at residue arginine 86.

This sequence belongs to the long (4 C-C) scorpion toxin superfamily. Sodium channel inhibitor family. Alpha subfamily. In terms of tissue distribution, expressed by the venom gland.

It localises to the secreted. Functionally, alpha toxins bind voltage-independently at site-3 of sodium channels (Nav) and inhibit the inactivation of the activated channels, thereby blocking neuronal transmission. This toxin inhibits inactivation of Nav1.6/SCN8A (EC(50)=790 nM) and drosophila DmNav1 (EC(50)=280 nM). The toxin (1 uM) does not significantly shift the midpoint of activation at the two channels, but induces a significant depolarizing shift in the V(1/2) of inactivation of the channels. Has antimicrobial activity. This is Sodium channel neurotoxin MeuNaTxalpha-5 from Mesobuthus eupeus (Lesser Asian scorpion).